Consider the following 165-residue polypeptide: Chorismate pyruvate-lyase (165 aa).

The substrate site is built by Met35, Arg77, Leu115, and Glu156.

It belongs to the UbiC family. Monomer.

It is found in the cytoplasm. The enzyme catalyses chorismate = 4-hydroxybenzoate + pyruvate. The protein operates within cofactor biosynthesis; ubiquinone biosynthesis. Its function is as follows. Removes the pyruvyl group from chorismate, with concomitant aromatization of the ring, to provide 4-hydroxybenzoate (4HB) for the ubiquinone pathway. This Salmonella agona (strain SL483) protein is Chorismate pyruvate-lyase.